We begin with the raw amino-acid sequence, 141 residues long: Hemoglobin subunit alpha-D (141 aa).

The region spanning 1-141 is the Globin domain; that stretch reads MLTADDKKLI…VAAVLAEKYR (141 aa). The heme b site is built by His58 and His87.

This sequence belongs to the globin family. As to quaternary structure, heterotetramer of two alpha-D chains and two beta chains. In terms of tissue distribution, red blood cells.

In terms of biological role, involved in oxygen transport from the lung to the various peripheral tissues. The chain is Hemoglobin subunit alpha-D (HBAD) from Aegypius monachus (Cinereous vulture).